Here is a 346-residue protein sequence, read N- to C-terminus: Holliday junction branch migration complex subunit RuvB (346 aa).

The segment covering 1 to 16 has biased composition (basic and acidic residues); the sequence is MSDADRLITPEKRGED. The disordered stretch occupies residues 1–23; that stretch reads MSDADRLITPEKRGEDIDTTLRP. The interval 1–182 is large ATPase domain (RuvB-L); sequence MSDADRLITP…FGIPVRLAFY (182 aa). ATP contacts are provided by residues L21, R22, G63, K66, T67, T68, 129-131, R172, Y182, and R219; that span reads EDF. A Mg(2+)-binding site is contributed by T67. The tract at residues 183–253 is small ATPAse domain (RuvB-S); that stretch reads TVDELELIVR…IADEALTRLL (71 aa). The interval 256 to 346 is head domain (RuvB-H); that stretch reads NMGLDQLDMR…AQFRLTLEDD (91 aa). Residues R292, R311, and R316 each contribute to the DNA site.

Belongs to the RuvB family. Homohexamer. Forms an RuvA(8)-RuvB(12)-Holliday junction (HJ) complex. HJ DNA is sandwiched between 2 RuvA tetramers; dsDNA enters through RuvA and exits via RuvB. An RuvB hexamer assembles on each DNA strand where it exits the tetramer. Each RuvB hexamer is contacted by two RuvA subunits (via domain III) on 2 adjacent RuvB subunits; this complex drives branch migration. In the full resolvosome a probable DNA-RuvA(4)-RuvB(12)-RuvC(2) complex forms which resolves the HJ.

The protein localises to the cytoplasm. It catalyses the reaction ATP + H2O = ADP + phosphate + H(+). In terms of biological role, the RuvA-RuvB-RuvC complex processes Holliday junction (HJ) DNA during genetic recombination and DNA repair, while the RuvA-RuvB complex plays an important role in the rescue of blocked DNA replication forks via replication fork reversal (RFR). RuvA specifically binds to HJ cruciform DNA, conferring on it an open structure. The RuvB hexamer acts as an ATP-dependent pump, pulling dsDNA into and through the RuvAB complex. RuvB forms 2 homohexamers on either side of HJ DNA bound by 1 or 2 RuvA tetramers; 4 subunits per hexamer contact DNA at a time. Coordinated motions by a converter formed by DNA-disengaged RuvB subunits stimulates ATP hydrolysis and nucleotide exchange. Immobilization of the converter enables RuvB to convert the ATP-contained energy into a lever motion, pulling 2 nucleotides of DNA out of the RuvA tetramer per ATP hydrolyzed, thus driving DNA branch migration. The RuvB motors rotate together with the DNA substrate, which together with the progressing nucleotide cycle form the mechanistic basis for DNA recombination by continuous HJ branch migration. Branch migration allows RuvC to scan DNA until it finds its consensus sequence, where it cleaves and resolves cruciform DNA. This is Holliday junction branch migration complex subunit RuvB from Agrobacterium fabrum (strain C58 / ATCC 33970) (Agrobacterium tumefaciens (strain C58)).